An 888-amino-acid polypeptide reads, in one-letter code: Leucine--tRNA ligase (888 aa).

The 'HIGH' region motif lies at 43-53; it reads PYPSGRIHMGH. Residues 644 to 648 carry the 'KMSKS' region motif; that stretch reads KMSKS. Lys-647 serves as a coordination point for ATP.

This sequence belongs to the class-I aminoacyl-tRNA synthetase family.

It is found in the cytoplasm. It catalyses the reaction tRNA(Leu) + L-leucine + ATP = L-leucyl-tRNA(Leu) + AMP + diphosphate. This Rhodopseudomonas palustris (strain BisA53) protein is Leucine--tRNA ligase.